Here is a 200-residue protein sequence, read N- to C-terminus: LHFPL tetraspan subfamily member 6 protein (200 aa).

Positions 1–21 are cleaved as a signal peptide; that stretch reads MASSLTCAGVIWALLSFLCAA. 2 consecutive transmembrane segments (helical) span residues 84 to 104 and 123 to 143; these read ICTVVTGIGCGLLLLVALTAI and GIQFVGGLLIGSGCALYPLGW. N-linked (GlcNAc...) asparagine glycosylation is present at Asn-154. A helical transmembrane segment spans residues 172-192; sequence CTGAGAAAAMVLCTWMACFAG.

Belongs to the LHFP family.

Its subcellular location is the membrane. The protein is LHFPL tetraspan subfamily member 6 protein of Danio rerio (Zebrafish).